Reading from the N-terminus, the 754-residue chain is Neprilysin-1 (754 aa).

A helical; Signal-anchor for type II membrane protein membrane pass occupies residues F5–L27. N-linked (GlcNAc...) asparagine glycans are attached at residues N38, N81, N132, N217, N273, N303, and N441. The Peptidase M13 domain maps to V63–W754. Intrachain disulfides connect C87/C739, C95/C699, C151/C414, and C624/C751. H587 contacts Zn(2+). Residue E588 is part of the active site. H591 contacts Zn(2+). An N-linked (GlcNAc...) asparagine glycan is attached at N612. E649 contributes to the Zn(2+) binding site. Catalysis depends on D653, which acts as the Proton donor.

It belongs to the peptidase M13 family. The cofactor is Zn(2+). In terms of tissue distribution, specifically expressed in pharyngeal cells and a single head neuron.

It localises to the membrane. Probable cell surface protease. Required to control the neuronal innervation of pharyngeal pumping. The protein is Neprilysin-1 (nep-1) of Caenorhabditis elegans.